We begin with the raw amino-acid sequence, 553 residues long: MAAESAIIPQLAESITPSSPAATCSGPMAGGDTSSNAHTSIPCQQDIVLDEQTKRELFTDTFCKVCNAVLQFESHRISHYEGKKHAQKVRLYFLKNELEEMALKTQRTDRVEFHVDGEVAQGKHKFCGLCNMVFSSPVVAQTHYVGKVHAKKMRQLAGEQVEWTPQTDQDFAAAAATSPVDSQTEIADSPAVEPTCDRRCEQEGSAEQQSCPDYEIDLNDPNKYCKLCCASFNKALVAQQHYSGKKHARNQARKKMMEEMEGTGVADSEVSDGRYVCPICNITLTSIEMYQSHMQGNKHQIKESMVANLMKTSKKNYDSFQDELADYIKVQKARGLVPKTQFRQEKDQYDSCDYEEEEEQEPEPGLLHGHINSKTNAPYKYLDRHPVPYPAHNPSHPTDQRVPPWAAHWEQASRPPKGHHLDLHKAKHISRSPTSQDSSDNSSGSSSDESSGSYKKDKRRKRKHHRESRLRGSGRIRRGDENSEKRKRKGEDADSGKEDNKHDRGKTSGGDKDKHRREKKKKEEQSKKHKKLKKEGEQRTEEEMLWDESILGF.

Positions 16–36 (TPSSPAATCSGPMAGGDTSSN) are disordered. 4 Matrin-type zinc fingers span residues 61 to 91 (TFCK…KVRL), 125 to 155 (KFCG…KMRQ), 223 to 253 (KYCK…NQAR), and 275 to 305 (YVCP…KESM). Disordered regions lie at residues 341–402 (QFRQ…DQRV) and 428–553 (HISR…ILGF). The segment covering 350 to 362 (DSCDYEEEEEQEP) has biased composition (acidic residues). Residues 431 to 453 (RSPTSQDSSDNSSGSSSDESSGS) are compositionally biased toward low complexity. Residues 456–476 (KDKRRKRKHHRESRLRGSGRI) are compositionally biased toward basic residues. Positions 477-513 (RRGDENSEKRKRKGEDADSGKEDNKHDRGKTSGGDKD) are enriched in basic and acidic residues.

It is found in the nucleus. This is Zinc finger matrin-type protein 1 (zmat1) from Xenopus tropicalis (Western clawed frog).